Here is a 78-residue protein sequence, read N- to C-terminus: Acyl carrier protein (78 aa).

Positions 2–77 (STIEERVKKI…AAIDYIEAAN (76 aa)) constitute a Carrier domain. At serine 37 the chain carries O-(pantetheine 4'-phosphoryl)serine.

It belongs to the acyl carrier protein (ACP) family. In terms of processing, 4'-phosphopantetheine is transferred from CoA to a specific serine of apo-ACP by AcpS. This modification is essential for activity because fatty acids are bound in thioester linkage to the sulfhydryl of the prosthetic group.

The protein localises to the cytoplasm. It functions in the pathway lipid metabolism; fatty acid biosynthesis. In terms of biological role, carrier of the growing fatty acid chain in fatty acid biosynthesis. In Edwardsiella ictaluri (strain 93-146), this protein is Acyl carrier protein.